The chain runs to 115 residues: UPF0597 protein NTHI1023 (115 aa).

It belongs to the UPF0597 family.

This is UPF0597 protein NTHI1023 from Haemophilus influenzae (strain 86-028NP).